A 130-amino-acid polypeptide reads, in one-letter code: Glycine cleavage system H protein (130 aa).

A Lipoyl-binding domain is found at 24–106; that stretch reads SVTVGITEHA…YGDGWIMRIQ (83 aa). An N6-lipoyllysine modification is found at K65.

This sequence belongs to the GcvH family. As to quaternary structure, the glycine cleavage system is composed of four proteins: P, T, L and H. (R)-lipoate serves as cofactor.

Its function is as follows. The glycine cleavage system catalyzes the degradation of glycine. The H protein shuttles the methylamine group of glycine from the P protein to the T protein. This Halorhodospira halophila (strain DSM 244 / SL1) (Ectothiorhodospira halophila (strain DSM 244 / SL1)) protein is Glycine cleavage system H protein.